The sequence spans 295 residues: Dual specificity protein phosphatase 15 (295 aa).

The 141-residue stretch at 1 to 141 (MTEGVLPGLY…LEEFGWASSQ (141 aa)) folds into the Tyrosine-protein phosphatase domain. The N-myristoyl glycine moiety is linked to residue T2. The active-site Phosphocysteine intermediate is the C85. Over residues 251 to 270 (SSSCTLSASTERPDGSSTPG) the composition is skewed to polar residues. The tract at residues 251–272 (SSSCTLSASTERPDGSSTPGNP) is disordered.

The protein belongs to the protein-tyrosine phosphatase family. Non-receptor class dual specificity subfamily. In terms of tissue distribution, highly expressed in testis. Expressed in brain; up-regulated in patients with multiple sclerosis gray matter lesions.

The protein localises to the cytoplasm. It localises to the cell membrane. The catalysed reaction is O-phospho-L-tyrosyl-[protein] + H2O = L-tyrosyl-[protein] + phosphate. The enzyme catalyses O-phospho-L-seryl-[protein] + H2O = L-seryl-[protein] + phosphate. It carries out the reaction O-phospho-L-threonyl-[protein] + H2O = L-threonyl-[protein] + phosphate. In terms of biological role, may dephosphorylate MAPK13, ATF2, ERBB3, PDGFRB and SNX6. May play a role in the regulation of oligodendrocyte differentiation. May play a role in the regulation of myelin formation. Involved in the regulation of Erk1/2 phosphorylation in Schwann cells; the signaling may be linked to the regulation of myelination. The polypeptide is Dual specificity protein phosphatase 15 (Homo sapiens (Human)).